The following is a 1816-amino-acid chain: MSGASVKVAVRVRPFNSRETSKESKCIIQMQGNSTSIINPKNPKEAPKSFSFDYSYWSHTSPEDPCFASQNRVYNDIGKEMLLHAFEGYNVCIFAYGQTGAGKSYTMMGKQEESQAGIIPQLCEELFEKINDNCNEEMSYSVEVSYMEIYCERVRDLLNPKNKGNLRVREHPLLGPYVEDLSKLAVTSYTDIADLMDAGNKARTVAATNMNETSSRSHAVFTIVFTQKKQDPETNLSTEKVSKISLVDLAGSERADSTGAKGTRLKEGANINKSLTTLGKVISALAEVDNCTSKSKKKKKTDFIPYRDSVLTWLLRENLGGNSRTAMVAALSPADINYDETLSTLRYADRAKQIKCNAVINEDPNAKLVRELKEEVTRLKDLLRAQGLGDIIDIDPLIDDYSGSGGKYLKDFQNNKHRYLLASENQRPGNFSTASMGSLTSSPSSCSLNSQVGLTSVTSIQERIMSTPGGEEAIERLKESEKIIAELNETWEEKLRKTEAIRMEREALLAEMGVAIREDGGTLGVFSPKKTPHLVNLNEDPLMSECLLYYIKDGITRVGQADAERRQDIVLSGAHIKEEHCLFRSERSNTGEVIVTLEPCERSETYVNGKRVAHPVQLRSGNRIIMGKNHVFRFNHPEQARAEREKTPSAETPSEPVDWTFAQRELLEKQGIDMKQEMEKRLQEMEILYKKEKEEADLLLEQQRLDYESKLQALQRQVETRSLAAETTEEEEEEEEVPWTQHEFELAQWAFRKWKSHQFTSLRDLLWGNAVYLKEANAISVELKKKVQFQFVLLTDTLYSPVPPELLPSEMEKTHEDRPFPRTVVAVEVQDLKNGATHYWSLDKLKQRLDLMREMYDRAGEVASSAQDDSETTMTGSDPFYDRFHWFKLVGSSPIFHGCVNERLADRTPSPTFSTADSDITELADEQQDAMEDFDDEAFVDDTGSDAGTEEGSELFSDGHDPFYDRSPWFILVGRAFVYLSNLLYPVPLIHRVAIVSEKGEVRGFLRVAVQAIAADEEAPDYGSGIRQSGTAKISFDNEYFNQSDFSSAAMTRSGLSLEELRIVEGQGQSSEVISPPEEVNRMNDLDLKSGTLLDGKMVMEGFSEEIGNHLKLGSAFTFRVTVLQASGILPEYADIFCQFNFLHRHDEAFSTEPLKNNGRGSPLGFYHVQNIAVEVTESFVDYIKTKPIVFEVFGHYQQHPLHLQGQDLNSPPQPSRRFFPPPMPLSKPVPATKLNTMNKTTLGQSMSKYDLLVWFEISELEPTGEYIPAVVDHTAGLPCQGTFLLHQGIQRRITVTIIHEKGSELHWKDVRELVVGRIRNKPEVDEAAVDAVLSLNIISAKSLKAAHSSSRTFYRFEAVWDSSLHNSLLLNRVTPYGEKIYMTLSAYLELDHCIQPAVITKDVCMVFYSRDAKISPPRSLRNLFGSGYSKSPDSNRVTGIYELSLCKMADTGSPGMQRRRRKVLDTSVAYVRGEENLAGWRPRGDSLILEHQWELEKLELLHEVEKTRHFLLLRERLGDSVPKSLSDSLSPSLSSGTLSTSTSISSQISTTTFESAITPSESSGYDSADVESLVDREKELATKCLQLLTHTFNREFSQVHGSISDCKLSDISPIGRDPSVSSFSSSTLTPSSTCPSLVDSRSSSMDQKTPEANSRASSPCQEFEQFQIVPTVETPYLARAGKNEFLNLVPDIEEVRAGSVVSKKGYLHFKEPLSSNWAKHFVVVRRPYVFIYNSDKDPVERGIINLSTAQVEYSEDQQAMVKTPNTFAVCTKHRGVLLQALNDKDMNDWLYAFNPLLAGTIRSKLSRRCPSQPKY.

Residue serine 2 is modified to N-acetylserine. The region spanning 5–354 is the Kinesin motor domain; the sequence is SVKVAVRVRP…LRYADRAKQI (350 aa). 97-104 serves as a coordination point for ATP; that stretch reads GQTGAGKS. An interaction with KIFBP region spans residues 270 to 350; it reads NINKSLTTLG…TLSTLRYADR (81 aa). Coiled coils occupy residues 365-386 and 470-502; these read NAKL…LRAQ and GEEA…EAIR. Residues 556-612 enclose the FHA domain; that stretch reads TRVGQADAERRQDIVLSGAHIKEEHCLFRSERSNTGEVIVTLEPCERSETYVNGKRV. Phosphothreonine is present on residues threonine 647 and threonine 652. Coiled-coil stretches lie at residues 668 to 737 and 841 to 869; these read EKQG…EEEV and SLDK…AQDD. Residues serine 1054, serine 1057, serine 1416, serine 1454, and serine 1487 each carry the phosphoserine modification. The interval 1522–1571 is disordered; sequence VPKSLSDSLSPSLSSGTLSTSTSISSQISTTTFESAITPSESSGYDSADV. Over residues 1525–1553 the composition is skewed to low complexity; the sequence is SLSDSLSPSLSSGTLSTSTSISSQISTTT. Over residues 1554–1566 the composition is skewed to polar residues; sequence FESAITPSESSGY. A phosphoserine mark is found at serine 1573, serine 1603, serine 1610, and serine 1613. Over residues 1620 to 1637 the composition is skewed to low complexity; the sequence is SVSSFSSSTLTPSSTCPS. The disordered stretch occupies residues 1620–1659; sequence SVSSFSSSTLTPSSTCPSLVDSRSSSMDQKTPEANSRASS. Over residues 1640 to 1659 the composition is skewed to polar residues; it reads DSRSSSMDQKTPEANSRASS. The region spanning 1702 to 1799 is the PH domain; it reads VSKKGYLHFK…WLYAFNPLLA (98 aa).

This sequence belongs to the TRAFAC class myosin-kinesin ATPase superfamily. Kinesin family. Unc-104 subfamily. Monomer. Interacts with KIFBP; positively regulates KIF1B microtubule motor activity. Interacts (via C-terminus end of the kinesin-motor domain) with CHP1; the interaction occurs in a calcium-dependent manner. In terms of assembly, interacts with MADD (via death domain); links this isoform to Rab3-carrying vesicles in anterograde synaptic vesicle transport. As to expression, expressed in the brain (at protein level).

The protein localises to the cytoplasm. Its subcellular location is the cytoskeleton. It is found in the cytoplasmic vesicle. It localises to the secretory vesicle. The protein resides in the synaptic vesicle membrane. The protein localises to the mitochondrion. The catalysed reaction is ATP + H2O + a kinesin associated with a microtubule at position (n) = ADP + phosphate a kinesin associated with a microtubule at position (n+1, toward the plus end).. Functionally, has a plus-end-directed microtubule motor activity and functions as a motor for transport of vesicles and organelles along microtubules. Its function is as follows. Has a plus-end-directed microtubule motor activity and functions as a motor for anterograde synaptic vesicle transport along axonal microtubules from the cell body to the presynapse in neuronal cells. Functions as a downstream effector in a developmental apoptotic pathway that is activated when nerve growth factor (NGF) becomes limiting for neuronal progenitor cells. In terms of biological role, has a plus-end-directed microtubule motor activity and functions as a motor for anterograde transport of mitochondria. The protein is Kinesin-like protein KIF1B of Mus musculus (Mouse).